Reading from the N-terminus, the 248-residue chain is ATP synthase subunit a, chloroplastic (248 aa).

Transmembrane regions (helical) follow at residues 37–57 (AQVLITSWIVIAILLSLAVLA), 96–116 (VPFIGTMFLFIFVSNWSGALF), 135–155 (INTTVALALLTSVAYFYAGLH), 200–220 (LVVAVLISLVPLVVPIPMMFL), and 221–241 (GLFTSAIQALIFATLAAAYIG).

Belongs to the ATPase A chain family. In terms of assembly, F-type ATPases have 2 components, CF(1) - the catalytic core - and CF(0) - the membrane proton channel. CF(1) has five subunits: alpha(3), beta(3), gamma(1), delta(1), epsilon(1). CF(0) has four main subunits: a, b, b' and c.

It localises to the plastid. It is found in the chloroplast thylakoid membrane. Key component of the proton channel; it plays a direct role in the translocation of protons across the membrane. The chain is ATP synthase subunit a, chloroplastic from Marchantia polymorpha (Common liverwort).